The sequence spans 112 residues: Large ribosomal subunit protein uL22 (112 aa).

It belongs to the universal ribosomal protein uL22 family. Part of the 50S ribosomal subunit.

Functionally, this protein binds specifically to 23S rRNA; its binding is stimulated by other ribosomal proteins, e.g. L4, L17, and L20. It is important during the early stages of 50S assembly. It makes multiple contacts with different domains of the 23S rRNA in the assembled 50S subunit and ribosome. In terms of biological role, the globular domain of the protein is located near the polypeptide exit tunnel on the outside of the subunit, while an extended beta-hairpin is found that lines the wall of the exit tunnel in the center of the 70S ribosome. The chain is Large ribosomal subunit protein uL22 from Moorella thermoacetica (strain ATCC 39073 / JCM 9320).